The following is a 155-amino-acid chain: Large ribosomal subunit protein uL13 (155 aa).

This sequence belongs to the universal ribosomal protein uL13 family. In terms of assembly, part of the 50S ribosomal subunit.

In terms of biological role, this protein is one of the early assembly proteins of the 50S ribosomal subunit, although it is not seen to bind rRNA by itself. It is important during the early stages of 50S assembly. The protein is Large ribosomal subunit protein uL13 of Rickettsia conorii (strain ATCC VR-613 / Malish 7).